The following is a 407-amino-acid chain: Tryptophan synthase beta chain (407 aa).

K91 is modified (N6-(pyridoxal phosphate)lysine).

It belongs to the TrpB family. In terms of assembly, tetramer of two alpha and two beta chains. It depends on pyridoxal 5'-phosphate as a cofactor.

The catalysed reaction is (1S,2R)-1-C-(indol-3-yl)glycerol 3-phosphate + L-serine = D-glyceraldehyde 3-phosphate + L-tryptophan + H2O. It participates in amino-acid biosynthesis; L-tryptophan biosynthesis; L-tryptophan from chorismate: step 5/5. In terms of biological role, the beta subunit is responsible for the synthesis of L-tryptophan from indole and L-serine. The chain is Tryptophan synthase beta chain from Streptococcus pneumoniae (strain JJA).